The primary structure comprises 142 residues: Hemoglobin subunit alpha (142 aa).

Residues 2 to 142 (VLSAADKGNV…VSTVLTSKYR (141 aa)) enclose the Globin domain. At Ser-4 the chain carries Phosphoserine. N6-succinyllysine is present on residues Lys-8 and Lys-12. Lys-17 carries the post-translational modification N6-acetyllysine; alternate. Lys-17 is modified (N6-succinyllysine; alternate). Tyr-25 carries the phosphotyrosine modification. Ser-36 is subject to Phosphoserine. At Lys-41 the chain carries N6-succinyllysine. A Phosphoserine modification is found at Ser-50. His-59 lines the O2 pocket. Residue His-88 participates in heme b binding. At Ser-103 the chain carries Phosphoserine. Thr-109 is subject to Phosphothreonine. Ser-125 bears the Phosphoserine mark. 2 positions are modified to phosphothreonine: Thr-135 and Thr-138. Phosphoserine is present on Ser-139.

This sequence belongs to the globin family. In terms of assembly, heterotetramer of two alpha chains and two beta chains. Red blood cells.

In terms of biological role, involved in oxygen transport from the lung to the various peripheral tissues. Functionally, hemopressin acts as an antagonist peptide of the cannabinoid receptor CNR1. Hemopressin-binding efficiently blocks cannabinoid receptor CNR1 and subsequent signaling. This Bos taurus (Bovine) protein is Hemoglobin subunit alpha (HBA).